Here is a 398-residue protein sequence, read N- to C-terminus: 1-deoxy-D-xylulose 5-phosphate reductoisomerase (398 aa).

Positions 11, 12, 13, 14, and 125 each coordinate NADPH. Lysine 126 lines the 1-deoxy-D-xylulose 5-phosphate pocket. Glutamate 127 contributes to the NADPH binding site. Residue aspartate 151 participates in Mn(2+) binding. 1-deoxy-D-xylulose 5-phosphate-binding residues include serine 152, glutamate 153, serine 186, and histidine 209. Glutamate 153 serves as a coordination point for Mn(2+). Residue glycine 215 participates in NADPH binding. Residues serine 222, asparagine 227, lysine 228, and glutamate 231 each coordinate 1-deoxy-D-xylulose 5-phosphate. Glutamate 231 contacts Mn(2+).

Belongs to the DXR family. Requires Mg(2+) as cofactor. It depends on Mn(2+) as a cofactor.

The enzyme catalyses 2-C-methyl-D-erythritol 4-phosphate + NADP(+) = 1-deoxy-D-xylulose 5-phosphate + NADPH + H(+). It participates in isoprenoid biosynthesis; isopentenyl diphosphate biosynthesis via DXP pathway; isopentenyl diphosphate from 1-deoxy-D-xylulose 5-phosphate: step 1/6. Its function is as follows. Catalyzes the NADPH-dependent rearrangement and reduction of 1-deoxy-D-xylulose-5-phosphate (DXP) to 2-C-methyl-D-erythritol 4-phosphate (MEP). This is 1-deoxy-D-xylulose 5-phosphate reductoisomerase from Acinetobacter baumannii (strain AB307-0294).